The primary structure comprises 361 residues: Oxidoreductase lepF (361 aa).

The helical transmembrane segment at 257-277 (MLMLVLQAVLLPVFYVVAMPL) threads the bilayer.

This sequence belongs to the NmrA-type oxidoreductase family.

The protein localises to the membrane. Its function is as follows. Oxidoreductase; part of the gene cluster 23 that mediates the biosynthesis of a family of 2-pyridones known as leporins. The hybrid PKS-NRPS synthetase lepA and the enoyl reductase lepG are responsible for fusion of phenylalanine with a hexaketide and subsequent release of the stable tetramic acid precursor, pre-leporin C. Because lepA lacks a designated enoylreductase (ER) domain, the required activity is provided the enoyl reductase lepG. It is possible that the dehydrogenase lepF also participates in production of pre-leporin C. Cytochrome P450 monooxygenase lepH is then required for the ring expansion step to yield leporin C. Leporin C is then presumably further oxidized by the N-hydroxylase lepD to form leporin B. LepI may possess a function in biosynthesis upstream of lepA. Leporin B is further oxidized in the presence of ferric ion to give the leporin B trimer-iron chelate, but whether or not this reaction is catalyzed by an enzyme in the pathway or by ferric ion is not determined yet. The protein is Oxidoreductase lepF of Aspergillus flavus (strain ATCC 200026 / FGSC A1120 / IAM 13836 / NRRL 3357 / JCM 12722 / SRRC 167).